Here is a 133-residue protein sequence, read N- to C-terminus: MAEKAVTIRTRKFMTNRLLSRKQFVIDVLHPGRANVSKAELKEKLARMYEVKDPNAIFVFKFRTHFGGGKSSGFGLIYDTVESAKKFEPKYRLIRNGLDTKIEKSRKQIKERKNRAKKIRGVKKTKAGDAKKK.

The tract at residues 104–133 (KSRKQIKERKNRAKKIRGVKKTKAGDAKKK) is disordered. The segment covering 109 to 125 (IKERKNRAKKIRGVKKT) has biased composition (basic residues).

Belongs to the eukaryotic ribosomal protein eS24 family.

In Arabidopsis thaliana (Mouse-ear cress), this protein is Small ribosomal subunit protein eS24z (RPS24A).